Consider the following 475-residue polypeptide: Bifunctional protein HldE (475 aa).

A ribokinase region spans residues Met-1–Thr-318. An ATP-binding site is contributed by Asn-195–Glu-198. Asp-264 is a catalytic residue. Residues Met-344–Lys-475 are cytidylyltransferase.

It in the N-terminal section; belongs to the carbohydrate kinase PfkB family. This sequence in the C-terminal section; belongs to the cytidylyltransferase family. Homodimer.

It catalyses the reaction D-glycero-beta-D-manno-heptose 7-phosphate + ATP = D-glycero-beta-D-manno-heptose 1,7-bisphosphate + ADP + H(+). The enzyme catalyses D-glycero-beta-D-manno-heptose 1-phosphate + ATP + H(+) = ADP-D-glycero-beta-D-manno-heptose + diphosphate. It functions in the pathway nucleotide-sugar biosynthesis; ADP-L-glycero-beta-D-manno-heptose biosynthesis; ADP-L-glycero-beta-D-manno-heptose from D-glycero-beta-D-manno-heptose 7-phosphate: step 1/4. The protein operates within nucleotide-sugar biosynthesis; ADP-L-glycero-beta-D-manno-heptose biosynthesis; ADP-L-glycero-beta-D-manno-heptose from D-glycero-beta-D-manno-heptose 7-phosphate: step 3/4. It participates in bacterial outer membrane biogenesis; LPS core biosynthesis. Catalyzes the phosphorylation of D-glycero-D-manno-heptose 7-phosphate at the C-1 position to selectively form D-glycero-beta-D-manno-heptose-1,7-bisphosphate. Its function is as follows. Catalyzes the ADP transfer from ATP to D-glycero-beta-D-manno-heptose 1-phosphate, yielding ADP-D-glycero-beta-D-manno-heptose. In Actinobacillus pleuropneumoniae (Haemophilus pleuropneumoniae), this protein is Bifunctional protein HldE (hldE).